A 299-amino-acid polypeptide reads, in one-letter code: GDNF family receptor alpha-4 (299 aa).

The N-terminal stretch at 1–20 (MVRCLGPALLLLLLLGSASS) is a signal peptide. The interval 145 to 198 (RGLSPAHRPPAAQASPPGLSGLVHPSAQRPRRLPAGPGRPLPARLRGPRGVPAG) is disordered. The segment covering 177–198 (LPAGPGRPLPARLRGPRGVPAG) has biased composition (low complexity). Residue Asn-208 is glycosylated (N-linked (GlcNAc...) asparagine). Residue Gly-278 is the site of GPI-anchor amidated glycine attachment. Residues 279–299 (RALERRSLLSILPVLALPALL) constitute a propeptide, removed in mature form.

The protein belongs to the GDNFR family. In terms of assembly, interacts with ARTN ligand and RET: forms a 2:2:2 ternary complex composed of ARTN ligand, GFRA3 and RET receptor. Interacts with SORL1. In terms of tissue distribution, predominantly expressed in the adult thyroid gland. Low levels also found in fetal adrenal and thyroid glands.

It is found in the cell membrane. Its subcellular location is the secreted. Its function is as follows. Receptor for persephin (PSPN), a growth factor that exhibits neurotrophic activity on mesencephalic dopaminergic and motor neurons. Acts by binding to its coreceptor, GFRA4, leading to autophosphorylation and activation of the RET receptor. May be important in C-cell development and, in the postnatal development of the adrenal medulla. In Homo sapiens (Human), this protein is GDNF family receptor alpha-4 (GFRA4).